The following is a 199-amino-acid chain: N-(5'-phosphoribosyl)anthranilate isomerase (199 aa).

It belongs to the TrpF family.

It carries out the reaction N-(5-phospho-beta-D-ribosyl)anthranilate = 1-(2-carboxyphenylamino)-1-deoxy-D-ribulose 5-phosphate. Its pathway is amino-acid biosynthesis; L-tryptophan biosynthesis; L-tryptophan from chorismate: step 3/5. This is N-(5'-phosphoribosyl)anthranilate isomerase from Sulfolobus acidocaldarius (strain ATCC 33909 / DSM 639 / JCM 8929 / NBRC 15157 / NCIMB 11770).